Reading from the N-terminus, the 1107-residue chain is Dynein axonemal assembly factor 1 homolog (1107 aa).

LRR repeat units lie at residues 34–56 (HLND…EEYV), 57–78 (GLKC…EYQT), 79–100 (ELKC…DSCK), 101–122 (QLDT…GHDI), 125–146 (VLNT…DHLR), and 150–171 (FVSV…KILG). The 40-residue stretch at 184–223 (NPVVNEIPSYRKTLILECKNLTYLDTRPVFDRDRACAEAW) folds into the LRRCT domain. 6 disordered regions span residues 258-281 (HRGD…KASK), 428-487 (NESP…TLNV), 500-608 (ESKD…LEKE), 780-810 (KEEP…EHEQ), 834-855 (SSED…AEED), and 1070-1107 (AAHA…DNCD). Polar residues predominate over residues 428–437 (NESPLTSPSF). A compositionally biased stretch (acidic residues) spans 446–459 (EEIEPTDVEEEQQI). Residues 500–512 (ESKDGELISKVES) show a composition bias toward basic and acidic residues. Over residues 531–544 (DNSESEPTDITNED) the composition is skewed to acidic residues. A compositionally biased stretch (low complexity) spans 549 to 560 (SSSVSVTSSTDS). Residues 581–597 (NYRQDSTTSTDSENEVS) are compositionally biased toward polar residues. Residues 801-810 (LEVHSSEHEQ) show a composition bias toward basic and acidic residues. Residues 844-855 (DSSESSDSAEED) show a composition bias toward acidic residues. Positions 1083–1097 (VESKPVEIDGTKEET) are enriched in basic and acidic residues. Residues 1098-1107 (VDSELADNCD) show a composition bias toward acidic residues.

The protein belongs to the DNAAF1 family.

Its subcellular location is the cell projection. The protein localises to the cilium. Cilium-specific protein required for cilia structures. This Aedes aegypti (Yellowfever mosquito) protein is Dynein axonemal assembly factor 1 homolog.